We begin with the raw amino-acid sequence, 785 residues long: E3 UFM1-protein ligase 1 homolog (785 aa).

The segment at 404-482 (NASFQDQDDD…AGGGGGNKKT (79 aa)) is disordered.

This sequence belongs to the UFL1 family.

E3 UFM1-protein ligase that mediates ufmylation of target proteins. This is E3 UFM1-protein ligase 1 homolog from Drosophila persimilis (Fruit fly).